The following is a 132-amino-acid chain: Large ribosomal subunit protein uL24 (132 aa).

The protein belongs to the universal ribosomal protein uL24 family. As to quaternary structure, part of the 50S ribosomal subunit.

One of two assembly initiator proteins, it binds directly to the 5'-end of the 23S rRNA, where it nucleates assembly of the 50S subunit. Functionally, one of the proteins that surrounds the polypeptide exit tunnel on the outside of the subunit. The polypeptide is Large ribosomal subunit protein uL24 (Aquifex aeolicus (strain VF5)).